A 279-amino-acid chain; its full sequence is NADPH-dependent 7-cyano-7-deazaguanine reductase (279 aa).

86–88 contacts substrate; that stretch reads IES. 88–89 serves as a coordination point for NADPH; it reads SK. C186 acts as the Thioimide intermediate in catalysis. D193 functions as the Proton donor in the catalytic mechanism. 225-226 is a binding site for substrate; the sequence is HE. 254 to 255 provides a ligand contact to NADPH; it reads RG.

The protein belongs to the GTP cyclohydrolase I family. QueF type 2 subfamily. Homodimer.

It is found in the cytoplasm. The enzyme catalyses 7-aminomethyl-7-carbaguanine + 2 NADP(+) = 7-cyano-7-deazaguanine + 2 NADPH + 3 H(+). Its pathway is tRNA modification; tRNA-queuosine biosynthesis. Its function is as follows. Catalyzes the NADPH-dependent reduction of 7-cyano-7-deazaguanine (preQ0) to 7-aminomethyl-7-deazaguanine (preQ1). This chain is NADPH-dependent 7-cyano-7-deazaguanine reductase, found in Chromobacterium violaceum (strain ATCC 12472 / DSM 30191 / JCM 1249 / CCUG 213 / NBRC 12614 / NCIMB 9131 / NCTC 9757 / MK).